Here is a 706-residue protein sequence, read N- to C-terminus: Lethal(3)malignant brain tumor-like protein 2 (706 aa).

Positions 1–85 (MEKPRGVEET…GTPRSLDGSG (85 aa)) are disordered. Phosphoserine is present on Ser13. Residues 15–26 (PMEEEEEDDDLE) show a composition bias toward acidic residues. Low complexity predominate over residues 39–50 (SSAGSESSSYLE). Residues 54 to 63 (EAEHEDREAG) show a composition bias toward basic and acidic residues. At Ser68 the chain carries Phosphoserine. The residue at position 77 (Thr77) is a Phosphothreonine. An FCS-type zinc finger spans residues 82-117 (DGSGSEPAVCEMCGIVGTREAFFSKTKRFCSVSCSR). Zn(2+) contacts are provided by Cys91, Cys94, Cys111, and Cys115. MBT repeat units lie at residues 180–284 (FDWG…LVPP), 292–392 (TDWK…IKLS), 398–501 (MAHH…LTPP), and 509–605 (FSWE…LQPP). Residue Ser339 is modified to Phosphoserine. Residue Lys406 forms a Glycyl lysine isopeptide (Lys-Gly) (interchain with G-Cter in SUMO2) linkage. The disordered stretch occupies residues 606–669 (VATEPTTPLK…KAPSEPAPDE (64 aa)). Over residues 620 to 635 (TKKKKKQFGKKRKRIP) the composition is skewed to basic residues. Residues Lys648, Lys660, and Lys676 each participate in a glycyl lysine isopeptide (Lys-Gly) (interchain with G-Cter in SUMO2) cross-link. The tract at residues 685–706 (ADKALSPELPVPVENIKQETDD) is disordered. A Phosphoserine modification is found at Ser690. A Glycyl lysine isopeptide (Lys-Gly) (interchain with G-Cter in SUMO1); alternate cross-link involves residue Lys701. Lys701 participates in a covalent cross-link: Glycyl lysine isopeptide (Lys-Gly) (interchain with G-Cter in SUMO2); alternate.

As to quaternary structure, part of the E2F6.com-1 complex in G0 phase composed of E2F6, MGA, MAX, TFDP1, CBX3, BAT8, EUHMTASE1, RING1, RNF2, MBLR, BAT8 and YAF2.

The protein resides in the nucleus. In terms of biological role, putative Polycomb group (PcG) protein. PcG proteins maintain the transcriptionally repressive state of genes, probably via a modification of chromatin, rendering it heritably changed in its expressibility. Its association with a chromatin-remodeling complex suggests that it may contribute to prevent expression of genes that trigger the cell into mitosis. Binds to monomethylated and dimethylated 'Lys-20' on histone H4. Binds histone H3 peptides that are monomethylated or dimethylated on 'Lys-4', 'Lys-9' or 'Lys-27'. In Bos taurus (Bovine), this protein is Lethal(3)malignant brain tumor-like protein 2 (L3MBTL2).